Reading from the N-terminus, the 428-residue chain is D-amino acid dehydrogenase (428 aa).

Residue valine 3 to tyrosine 17 coordinates FAD.

The protein belongs to the DadA oxidoreductase family. Requires FAD as cofactor.

The enzyme catalyses a D-alpha-amino acid + A + H2O = a 2-oxocarboxylate + AH2 + NH4(+). The protein operates within amino-acid degradation; D-alanine degradation; NH(3) and pyruvate from D-alanine: step 1/1. Functionally, oxidative deamination of D-amino acids. This Burkholderia pseudomallei (strain 1106a) protein is D-amino acid dehydrogenase.